A 120-amino-acid chain; its full sequence is Basic phospholipase A2 Cc2-PLA2 (120 aa).

7 disulfide bridges follow: Cys26–Cys113, Cys28–Cys44, Cys43–Cys95, Cys49–Cys120, Cys50–Cys88, Cys57–Cys81, and Cys75–Cys86. The Ca(2+) site is built by Tyr27, Gly29, and Gly31. Residue His47 is part of the active site. Asp48 provides a ligand contact to Ca(2+). Asp89 is an active-site residue.

It belongs to the phospholipase A2 family. Group II subfamily. D49 sub-subfamily. Monomer. Ca(2+) is required as a cofactor. Expressed by the venom gland.

The protein resides in the secreted. It catalyses the reaction a 1,2-diacyl-sn-glycero-3-phosphocholine + H2O = a 1-acyl-sn-glycero-3-phosphocholine + a fatty acid + H(+). Basic phospholipase A2 that inhibits ADP-, thrombin- and arachidonic acid-induced platelet aggregation. It also exhibits anticoagulant effects upon human plasma in vitro. It induces a high hemolytic activity reaching its maximum after 24 hours. It induces a marked elevation of plasmatic levels of interleukin-6 and -10, eosinophil peroxidase and complement lytic activities and it also provokes a drastic increase of lymphocytes, monocytes and neutrophils in peripheral blood accompanied by a rapid intense migration of neutrophils to the peritoneal cavity. PLA2 catalyzes the calcium-dependent hydrolysis of the 2-acyl groups in 3-sn-phosphoglycerides. The chain is Basic phospholipase A2 Cc2-PLA2 from Cerastes cerastes (Horned desert viper).